A 137-amino-acid chain; its full sequence is Ribosome-binding factor A (137 aa).

A disordered region spans residues Arg110–Asp137. A compositionally biased stretch (basic and acidic residues) spans Gln112–Asn125.

It belongs to the RbfA family. As to quaternary structure, monomer. Binds 30S ribosomal subunits, but not 50S ribosomal subunits or 70S ribosomes.

Its subcellular location is the cytoplasm. Its function is as follows. One of several proteins that assist in the late maturation steps of the functional core of the 30S ribosomal subunit. Associates with free 30S ribosomal subunits (but not with 30S subunits that are part of 70S ribosomes or polysomes). Required for efficient processing of 16S rRNA. May interact with the 5'-terminal helix region of 16S rRNA. The chain is Ribosome-binding factor A from Rhodopirellula baltica (strain DSM 10527 / NCIMB 13988 / SH1).